A 362-amino-acid polypeptide reads, in one-letter code: Dihydroorotate dehydrogenase (quinone) (362 aa).

FMN is bound by residues 62-66 (AGYDK) and T86. Residue K66 coordinates substrate. Position 111–115 (111–115 (NRLGF)) interacts with substrate. N139 and N170 together coordinate FMN. N170 provides a ligand contact to substrate. S173 acts as the Nucleophile in catalysis. N175 serves as a coordination point for substrate. Residues K215 and S243 each coordinate FMN. Residue 244-245 (NT) participates in substrate binding. FMN is bound by residues G266, G295, and 316-317 (YS).

It belongs to the dihydroorotate dehydrogenase family. Type 2 subfamily. As to quaternary structure, monomer. It depends on FMN as a cofactor.

It localises to the cell membrane. The enzyme catalyses (S)-dihydroorotate + a quinone = orotate + a quinol. The protein operates within pyrimidine metabolism; UMP biosynthesis via de novo pathway; orotate from (S)-dihydroorotate (quinone route): step 1/1. Functionally, catalyzes the conversion of dihydroorotate to orotate with quinone as electron acceptor. The chain is Dihydroorotate dehydrogenase (quinone) from Rhizobium johnstonii (strain DSM 114642 / LMG 32736 / 3841) (Rhizobium leguminosarum bv. viciae).